We begin with the raw amino-acid sequence, 180 residues long: Large ribosomal subunit protein uL16 (180 aa).

The protein belongs to the universal ribosomal protein uL16 family.

This is Large ribosomal subunit protein uL16 from Thermococcus sibiricus (strain DSM 12597 / MM 739).